Reading from the N-terminus, the 591-residue chain is Aspartate--tRNA(Asp/Asn) ligase (591 aa).

E175 is an L-aspartate binding site. The tract at residues 199-202 (QQFK) is aspartate. R221 and H453 together coordinate L-aspartate. 221 to 223 (RDE) lines the ATP pocket. Position 486 (E486) interacts with ATP. Residue R493 coordinates L-aspartate. Residue 538 to 541 (GIDR) coordinates ATP.

This sequence belongs to the class-II aminoacyl-tRNA synthetase family. Type 1 subfamily. Homodimer.

The protein localises to the cytoplasm. It catalyses the reaction tRNA(Asx) + L-aspartate + ATP = L-aspartyl-tRNA(Asx) + AMP + diphosphate. Its function is as follows. Aspartyl-tRNA synthetase with relaxed tRNA specificity since it is able to aspartylate not only its cognate tRNA(Asp) but also tRNA(Asn). Reaction proceeds in two steps: L-aspartate is first activated by ATP to form Asp-AMP and then transferred to the acceptor end of tRNA(Asp/Asn). The sequence is that of Aspartate--tRNA(Asp/Asn) ligase from Jannaschia sp. (strain CCS1).